Reading from the N-terminus, the 153-residue chain is Small ribosomal subunit protein uS19 (153 aa).

This sequence belongs to the universal ribosomal protein uS19 family.

This chain is Small ribosomal subunit protein uS19 (RPS15), found in Elaeis oleifera (American oil palm).